Reading from the N-terminus, the 208-residue chain is High frequency lysogenization protein HflD homolog (208 aa).

This sequence belongs to the HflD family.

The protein resides in the cytoplasm. It is found in the cell inner membrane. The protein is High frequency lysogenization protein HflD homolog of Pseudomonas putida (strain ATCC 700007 / DSM 6899 / JCM 31910 / BCRC 17059 / LMG 24140 / F1).